We begin with the raw amino-acid sequence, 245 residues long: tRNA pseudouridine synthase A (245 aa).

Catalysis depends on Asp-52, which acts as the Nucleophile. Tyr-111 is a substrate binding site.

It belongs to the tRNA pseudouridine synthase TruA family. Homodimer.

The catalysed reaction is uridine(38/39/40) in tRNA = pseudouridine(38/39/40) in tRNA. Formation of pseudouridine at positions 38, 39 and 40 in the anticodon stem and loop of transfer RNAs. The chain is tRNA pseudouridine synthase A from Nitrobacter hamburgensis (strain DSM 10229 / NCIMB 13809 / X14).